The sequence spans 434 residues: Maintenance of mitochondrial morphology protein 1 (434 aa).

The Lumenal segment spans residues 1–105 (MEMSELLASE…SFSSQSFAEG (105 aa)). The chain crosses the membrane as a helical span at residues 106–126 (LIVGQLSVIVALIFVIKFFVF). The Cytoplasmic portion of the chain corresponds to 127 to 434 (SEGGTKTATA…DDSVSVKSND (308 aa)). An SMP-LTD domain is found at 194-408 (SPESLDWFNV…EPRFQFVKLP (215 aa)). Residues 415–434 (KNTRKEKTDTDDSVSVKSND) form a disordered region.

Belongs to the MMM1 family. In terms of assembly, homodimer. Component of the ER-mitochondria encounter structure (ERMES) or MDM complex, composed of MMM1, MDM10, MDM12 and MDM34. An MMM1 homodimer associates with one molecule of MDM12 on each side in a pairwise head-to-tail manner, and the SMP-LTD domains of MMM1 and MDM12 generate a continuous hydrophobic tunnel for phospholipid trafficking.

The protein resides in the endoplasmic reticulum membrane. Component of the ERMES/MDM complex, which serves as a molecular tether to connect the endoplasmic reticulum (ER) and mitochondria. Components of this complex are involved in the control of mitochondrial shape and protein biogenesis, and function in nonvesicular lipid trafficking between the ER and mitochondria. The MDM12-MMM1 subcomplex functions in the major beta-barrel assembly pathway that is responsible for biogenesis of all outer membrane beta-barrel proteins, and acts in a late step after the SAM complex. The MDM10-MDM12-MMM1 subcomplex further acts in the TOM40-specific pathway after the action of the MDM12-MMM1 complex. Essential for establishing and maintaining the structure of mitochondria and maintenance of mtDNA nucleoids. This Kluyveromyces lactis (strain ATCC 8585 / CBS 2359 / DSM 70799 / NBRC 1267 / NRRL Y-1140 / WM37) (Yeast) protein is Maintenance of mitochondrial morphology protein 1.